Reading from the N-terminus, the 293-residue chain is Ribonuclease HIII (293 aa).

The region spanning 78-293 is the RNase H type-2 domain; that stretch reads LPLIGTDEVG…TEKAKKRLER (216 aa). Aspartate 84, glutamate 85, and aspartate 187 together coordinate a divalent metal cation.

The protein belongs to the RNase HII family. RnhC subfamily. The cofactor is Mn(2+). Mg(2+) serves as cofactor.

It localises to the cytoplasm. The catalysed reaction is Endonucleolytic cleavage to 5'-phosphomonoester.. Functionally, endonuclease that specifically degrades the RNA of RNA-DNA hybrids. The polypeptide is Ribonuclease HIII (Streptococcus pneumoniae (strain JJA)).